Reading from the N-terminus, the 406-residue chain is 2,3-bisphosphoglycerate-independent phosphoglycerate mutase (406 aa).

This sequence belongs to the BPG-independent phosphoglycerate mutase family. A-PGAM subfamily.

It catalyses the reaction (2R)-2-phosphoglycerate = (2R)-3-phosphoglycerate. The protein operates within carbohydrate degradation; glycolysis; pyruvate from D-glyceraldehyde 3-phosphate: step 3/5. In terms of biological role, catalyzes the interconversion of 2-phosphoglycerate and 3-phosphoglycerate. The protein is 2,3-bisphosphoglycerate-independent phosphoglycerate mutase of Methanococcus maripaludis (strain C6 / ATCC BAA-1332).